A 66-amino-acid polypeptide reads, in one-letter code: Beta-mammal toxin Cv1 (66 aa).

The LCN-type CS-alpha/beta domain occupies 1 to 66 (KEGYIVNLST…VWPLPKKTCN (66 aa)). Intrachain disulfides connect C12/C65, C16/C41, C25/C46, and C29/C48.

Expressed by the venom gland.

The protein localises to the secreted. Is susceptible to be neutralized by human antibodies scFvs 10FG2 and HV. In terms of biological role, beta toxins bind voltage-independently at site-4 of sodium channels (Nav) and reduces peak current and shifts the voltage of activation toward more negative potentials thereby affecting sodium channel activation and promoting spontaneous and repetitive firing. This toxin is slightly toxic to mice. The chain is Beta-mammal toxin Cv1 from Centruroides villegasi (Scorpion).